A 225-amino-acid chain; its full sequence is MAKVRFGIVVFPGSNCDRDVAWVTRGLLGCPTRLIWHRETDLSGLDVVVLPGGFSYGDYLRAGALARFAPVMGSLAEHGARGGYVLGICNGFQILTEAGLLPGALVRNANLHFICDRVGIRVERQDLPWTSAYPCGATLTLPIAHGEGRYVCDADTLKQLQDRGQIVFRYAPVAPNGSVDNIAGICDPSGRILGLMPHPERAADPDLPGQDGIPFWQSIVQSLAG.

In terms of domain architecture, Glutamine amidotransferase type-1 spans 5 to 225 (RFGIVVFPGS…WQSIVQSLAG (221 aa)). Residue Cys89 is the Nucleophile of the active site. Residues His198 and Glu200 contribute to the active site.

As to quaternary structure, part of the FGAM synthase complex composed of 1 PurL, 1 PurQ and 2 PurS subunits.

The protein resides in the cytoplasm. It carries out the reaction N(2)-formyl-N(1)-(5-phospho-beta-D-ribosyl)glycinamide + L-glutamine + ATP + H2O = 2-formamido-N(1)-(5-O-phospho-beta-D-ribosyl)acetamidine + L-glutamate + ADP + phosphate + H(+). The catalysed reaction is L-glutamine + H2O = L-glutamate + NH4(+). The protein operates within purine metabolism; IMP biosynthesis via de novo pathway; 5-amino-1-(5-phospho-D-ribosyl)imidazole from N(2)-formyl-N(1)-(5-phospho-D-ribosyl)glycinamide: step 1/2. Its function is as follows. Part of the phosphoribosylformylglycinamidine synthase complex involved in the purines biosynthetic pathway. Catalyzes the ATP-dependent conversion of formylglycinamide ribonucleotide (FGAR) and glutamine to yield formylglycinamidine ribonucleotide (FGAM) and glutamate. The FGAM synthase complex is composed of three subunits. PurQ produces an ammonia molecule by converting glutamine to glutamate. PurL transfers the ammonia molecule to FGAR to form FGAM in an ATP-dependent manner. PurS interacts with PurQ and PurL and is thought to assist in the transfer of the ammonia molecule from PurQ to PurL. The chain is Phosphoribosylformylglycinamidine synthase subunit PurQ from Synechococcus sp. (strain JA-3-3Ab) (Cyanobacteria bacterium Yellowstone A-Prime).